The primary structure comprises 514 residues: Cytochrome P450 monooxygenase aneD (514 aa).

The chain crosses the membrane as a helical span at residues 6–26; sequence ICTLLAVIATTSLGLLFLSII. N113, N261, and N347 each carry an N-linked (GlcNAc...) asparagine glycan. C424 serves as a coordination point for heme.

Belongs to the cytochrome P450 family. Heme serves as cofactor.

The protein resides in the membrane. The enzyme catalyses asperaculane D + reduced [NADPH--hemoprotein reductase] + O2 = asperaculane E + oxidized [NADPH--hemoprotein reductase] + H2O + H(+). Its pathway is secondary metabolite biosynthesis. In terms of biological role, cytochrome P450 monooxygenase; part of the gene cluster that mediates the biosynthesis of aculenes, a unique type of norsesquiterpenes that contain a nordaucane skeleton linked to an L-proline moiety and are of mixed biosynthetic origin. The pathway begins with the synthesis of dauca-4,7-diene by the terpene cyclase aneC using farnesyl pyrophosphate (FPP) as substrate. The cytochrome P450 monooxygenase aneF then performs the initial oxidation at C-12 of dauca-4,7-diene to yield asperaculane D. Asperaculane D is substrate of the cytochrome P450 monooxygenase aneD for C-10 hydroxylation to yield asperaculane E. The cytochrome P450 monooxygenase aneG then converts asperaculane E into aculene D via C-2 oxidation. The monomodular nonribosomal peptide synthtase aneB adenylates L-proline and the thiohydrolase aneE transfers this activated L-proline derivative to aculenes D and C to produce respectively aculenes B and A. The dioxygenase aneA converts aculene D into aculene C, and aculene B into aculene A by introducing the 5,6-alkene moiety. Asperculanes A, B, C and F, as well as 14-prolyl asperculane C, might be shunt products of the pathway. This chain is Cytochrome P450 monooxygenase aneD, found in Aspergillus aculeatus (strain ATCC 16872 / CBS 172.66 / WB 5094).